Here is a 98-residue protein sequence, read N- to C-terminus: NADH-ubiquinone oxidoreductase chain 4L (98 aa).

3 helical membrane passes run 1 to 21 (MSLTYMNMFMAFTISLLGLLL), 29 to 49 (SLLCLEGMMLSLFVMMTMIIL), and 61 to 81 (IILLVFAACEAALGLSLLVMV).

The protein belongs to the complex I subunit 4L family. As to quaternary structure, core subunit of respiratory chain NADH dehydrogenase (Complex I) which is composed of 45 different subunits.

It is found in the mitochondrion inner membrane. It carries out the reaction a ubiquinone + NADH + 5 H(+)(in) = a ubiquinol + NAD(+) + 4 H(+)(out). Its function is as follows. Core subunit of the mitochondrial membrane respiratory chain NADH dehydrogenase (Complex I) which catalyzes electron transfer from NADH through the respiratory chain, using ubiquinone as an electron acceptor. Part of the enzyme membrane arm which is embedded in the lipid bilayer and involved in proton translocation. The polypeptide is NADH-ubiquinone oxidoreductase chain 4L (MT-ND4L) (Platyrrhinus brachycephalus (Short-headed broad-nosed bat)).